We begin with the raw amino-acid sequence, 317 residues long: MTVYLLANFGGPRISQEIPSFLHALLTDQDVTGGRIPPWLHRPLFSYIAKRRAHRVAEQYAYLGGRSPIFQDTEKLAQNLSQELQAPVISFHRYLTETHQDTLAALRESAGDIIGIPLFPHYTFAVTGSIIRFFLERIPEKPMAWITHFGVHPQFISCMREHIQDCLIAQGIVAEDCFFLFSVHGLPMRHIRLGDPYAKQCQDSFNALIGESEGVLSFQSKFGIGEWLVPSTKEICQSLCTKKRYIVVVPFGFVSDHIETLYEIDHLYVPMLLQRGYRVVRVPAINTSDRWVSALASIVKSSPHETILEPLLMPKRR.

Fe cation contacts are provided by H184 and E259.

This sequence belongs to the ferrochelatase family.

It is found in the cytoplasm. It catalyses the reaction heme b + 2 H(+) = protoporphyrin IX + Fe(2+). It participates in porphyrin-containing compound metabolism; protoheme biosynthesis; protoheme from protoporphyrin-IX: step 1/1. In terms of biological role, catalyzes the ferrous insertion into protoporphyrin IX. This chain is Ferrochelatase, found in Chlamydia muridarum (strain MoPn / Nigg).